Here is a 510-residue protein sequence, read N- to C-terminus: ATP synthase subunit alpha (510 aa).

169–176 (GDRQTGKT) contributes to the ATP binding site.

Belongs to the ATPase alpha/beta chains family. F-type ATPases have 2 components, CF(1) - the catalytic core - and CF(0) - the membrane proton channel. CF(1) has five subunits: alpha(3), beta(3), gamma(1), delta(1), epsilon(1). CF(0) has three main subunits: a(1), b(2) and c(9-12). The alpha and beta chains form an alternating ring which encloses part of the gamma chain. CF(1) is attached to CF(0) by a central stalk formed by the gamma and epsilon chains, while a peripheral stalk is formed by the delta and b chains.

It is found in the cell inner membrane. The catalysed reaction is ATP + H2O + 4 H(+)(in) = ADP + phosphate + 5 H(+)(out). Its function is as follows. Produces ATP from ADP in the presence of a proton gradient across the membrane. The alpha chain is a regulatory subunit. The protein is ATP synthase subunit alpha of Azorhizobium caulinodans (strain ATCC 43989 / DSM 5975 / JCM 20966 / LMG 6465 / NBRC 14845 / NCIMB 13405 / ORS 571).